The chain runs to 574 residues: ATP synthase subunit beta, mitochondrial (574 aa).

The N-terminal 26 residues, 1–26 (MLSSVRLAALRAGKTNSVFQAVRAFA), are a transit peptide targeting the mitochondrion. 183–190 (GGAGVGKT) provides a ligand contact to ATP.

The protein belongs to the ATPase alpha/beta chains family. In terms of assembly, F-type ATPases have 2 components, CF(1) - the catalytic core - and CF(0) - the membrane proton channel. CF(1) has five subunits: alpha(3), beta(3), gamma(1), delta(1), epsilon(1). CF(0) has three main subunits: a, b and c.

Its subcellular location is the mitochondrion. It is found in the mitochondrion inner membrane. It catalyses the reaction ATP + H2O + 4 H(+)(in) = ADP + phosphate + 5 H(+)(out). In terms of biological role, mitochondrial membrane ATP synthase (F(1)F(0) ATP synthase or Complex V) produces ATP from ADP in the presence of a proton gradient across the membrane which is generated by electron transport complexes of the respiratory chain. F-type ATPases consist of two structural domains, F(1) - containing the extramembraneous catalytic core, and F(0) - containing the membrane proton channel, linked together by a central stalk and a peripheral stalk. During catalysis, ATP synthesis in the catalytic domain of F(1) is coupled via a rotary mechanism of the central stalk subunits to proton translocation. Subunits alpha and beta form the catalytic core in F(1). Rotation of the central stalk against the surrounding alpha(3)beta(3) subunits leads to hydrolysis of ATP in three separate catalytic sites on the beta subunits. The protein is ATP synthase subunit beta, mitochondrial (ATP2) of Chlamydomonas reinhardtii (Chlamydomonas smithii).